We begin with the raw amino-acid sequence, 306 residues long: Porphobilinogen deaminase (306 aa).

Residue cysteine 237 is modified to S-(dipyrrolylmethanemethyl)cysteine.

The protein belongs to the HMBS family. Monomer. It depends on dipyrromethane as a cofactor.

It carries out the reaction 4 porphobilinogen + H2O = hydroxymethylbilane + 4 NH4(+). Its pathway is porphyrin-containing compound metabolism; protoporphyrin-IX biosynthesis; coproporphyrinogen-III from 5-aminolevulinate: step 2/4. Tetrapolymerization of the monopyrrole PBG into the hydroxymethylbilane pre-uroporphyrinogen in several discrete steps. The chain is Porphobilinogen deaminase from Syntrophus aciditrophicus (strain SB).